The chain runs to 308 residues: Eukaryotic translation initiation factor 3 subunit G (308 aa).

The interval 1–23 (MAPVAAPSTSQPAGGKPMNWADE) is disordered. The RRM domain maps to 225 to 303 (PTLRVTNLSE…LILSCQWSLP (79 aa)).

This sequence belongs to the eIF-3 subunit G family. Component of the eukaryotic translation initiation factor 3 (eIF-3) complex.

The protein resides in the cytoplasm. In terms of biological role, RNA-binding component of the eukaryotic translation initiation factor 3 (eIF-3) complex, which is involved in protein synthesis of a specialized repertoire of mRNAs and, together with other initiation factors, stimulates binding of mRNA and methionyl-tRNAi to the 40S ribosome. The eIF-3 complex specifically targets and initiates translation of a subset of mRNAs involved in cell proliferation. This subunit can bind 18S rRNA. The sequence is that of Eukaryotic translation initiation factor 3 subunit G from Mycosarcoma maydis (Corn smut fungus).